Reading from the N-terminus, the 506-residue chain is GMP synthase [glutamine-hydrolyzing] (506 aa).

The 189-residue stretch at 2 to 190 (SIVILDFGSQ…FLDICGVTRD (189 aa)) folds into the Glutamine amidotransferase type-1 domain. Cysteine 79 (nucleophile) is an active-site residue. Residues histidine 165 and glutamate 167 contribute to the active site. The 191-residue stretch at 191–381 (WNAEHIVDEL…LGLPDHIRMR (191 aa)) folds into the GMPS ATP-PPase domain. 219–225 (SGGVDSS) is an ATP binding site.

Homodimer.

It carries out the reaction XMP + L-glutamine + ATP + H2O = GMP + L-glutamate + AMP + diphosphate + 2 H(+). It functions in the pathway purine metabolism; GMP biosynthesis; GMP from XMP (L-Gln route): step 1/1. Its function is as follows. Catalyzes the synthesis of GMP from XMP. The polypeptide is GMP synthase [glutamine-hydrolyzing] (guaA) (Deinococcus radiodurans (strain ATCC 13939 / DSM 20539 / JCM 16871 / CCUG 27074 / LMG 4051 / NBRC 15346 / NCIMB 9279 / VKM B-1422 / R1)).